Reading from the N-terminus, the 968-residue chain is Alanine--tRNA ligase, cytoplasmic (968 aa).

Residue methionine 1 is modified to N-acetylmethionine. Phosphoserine occurs at positions 3 and 8. At lysine 19 the chain carries N6-acetyllysine. ATP contacts are provided by residues arginine 77, histidine 95, tryptophan 176, and 214 to 216; that span reads IWN. L-alanine is bound by residues asparagine 216 and aspartate 239. Glycine 243 is a binding site for ATP. Phosphoserine is present on residues serine 399 and serine 555. Zn(2+)-binding residues include histidine 605, histidine 609, cysteine 723, and histidine 727. The short motif at 750–763 is the Nuclear localization signal element; that stretch reads RRIVAVTGAEAQKA. Lysine 876 carries the post-translational modification N6-acetyllysine. Lysine 943 is modified (N6,N6,N6-trimethyllysine; alternate). An N6,N6-dimethyllysine; alternate modification is found at lysine 943. At lysine 943 the chain carries N6-methyllysine; alternate.

It belongs to the class-II aminoacyl-tRNA synthetase family. In terms of assembly, monomer. Interacts with ANKRD16; the interaction is direct. Requires Zn(2+) as cofactor. Post-translationally, ISGylated. Methylation at 'Lys-943' by METTL21C.

The protein localises to the cytoplasm. It localises to the nucleus. It catalyses the reaction tRNA(Ala) + L-alanine + ATP = L-alanyl-tRNA(Ala) + AMP + diphosphate. The catalysed reaction is (S)-lactate + ATP + H(+) = (S)-lactoyl-AMP + diphosphate. It carries out the reaction (S)-lactoyl-AMP + L-lysyl-[protein] = N(6)-[(S)-lactoyl]-L-lysyl-[protein] + AMP + 2 H(+). With respect to regulation, the protein lactyltransferase activity is inhibited by beta-alanine. Catalyzes the attachment of alanine to tRNA(Ala) in a two-step reaction: alanine is first activated by ATP to form Ala-AMP and then transferred to the acceptor end of tRNA(Ala). Also edits incorrectly charged tRNA(Ala) via its editing domain. In presence of high levels of lactate, also acts as a protein lactyltransferase that mediates lactylation of lysine residues in target proteins, such as TEAD1, TP53/p53 and YAP1. Protein lactylation takes place in a two-step reaction: lactate is first activated by ATP to form lactate-AMP and then transferred to lysine residues of target proteins. Acts as an inhibitor of TP53/p53 activity by catalyzing lactylation of TP53/p53. Acts as a positive regulator of the Hippo pathway by mediating lactylation of TEAD1 and YAP1. The sequence is that of Alanine--tRNA ligase, cytoplasmic (AARS1) from Pongo abelii (Sumatran orangutan).